An 89-amino-acid polypeptide reads, in one-letter code: UPF0473 protein Helmi_02360 (89 aa).

Belongs to the UPF0473 family.

The sequence is that of UPF0473 protein Helmi_02360 from Heliobacterium modesticaldum (strain ATCC 51547 / Ice1).